Consider the following 165-residue polypeptide: MLMPKKNRIAIYELLFKEGVMVAKKDVHMPKHPELADKNVPNLHVMKAMQSLKSRGYVKEQFAWRHFYWYLTNEGIQYLRDYLHLPPEIVPATLRRSRPETGRPRPKGPEGERPARFTRGEADRDTYRRSAVPPGADKKAEAGAGSATEFQFRGGFGRGRGQPPQ.

Y12 is modified (phosphotyrosine). A disordered region spans residues 90-165; that stretch reads VPATLRRSRP…FGRGRGQPPQ (76 aa). A compositionally biased stretch (basic and acidic residues) spans 97 to 128; the sequence is SRPETGRPRPKGPEGERPARFTRGEADRDTYR. Residues K138 and K139 each participate in a glycyl lysine isopeptide (Lys-Gly) (interchain with G-Cter in ubiquitin) cross-link. S146 carries the phosphoserine modification. An Omega-N-methylarginine modification is found at R153. Residues 154–165 are compositionally biased toward gly residues; the sequence is GGFGRGRGQPPQ. A symmetric dimethylarginine mark is found at R158 and R160.

It belongs to the eukaryotic ribosomal protein eS10 family. As to quaternary structure, component of the small ribosomal subunit. The methylated form interacts with NPM1. Post-translationally, methylated by PRMT5. Methylation is necessary for its interaction with NPS1, its localization in the granular component (GC) region of the nucleolus, for the proper assembly of ribosomes, protein synthesis and optimal cell proliferation. Monoubiquitinated by ZNF598 when a ribosome has stalled during translation of poly(A) sequences, leading to preclude synthesis of a long poly-lysine tail and initiate the ribosome quality control (RQC) pathway to degrade the potentially detrimental aberrant nascent polypeptide. Deubiquitinated by OTUD3 and USP21, antagonizing ZNF598 activity. Deubiquitinated by OTUD1, antagonizing ZNF598 activity and stimulating formation of polysomes: deubiquitination by OTUD1 promotes stability and translation of a subset mRNAs with a high abundance of rare codons can limit the translation rate. Deubiquitinated by USP10.

It is found in the cytoplasm. The protein localises to the nucleus. The protein resides in the nucleolus. Functionally, component of the 40S ribosomal subunit. The ribosome is a large ribonucleoprotein complex responsible for the synthesis of proteins in the cell. The chain is Small ribosomal subunit protein eS10 (Rps10) from Rattus norvegicus (Rat).